Here is a 277-residue protein sequence, read N- to C-terminus: Glucose-6-phosphatase catalytic subunit 1 (277 aa).

Arg-4 serves as a coordination point for substrate. 2 helical membrane passes run 39-59 (GHAM…LSIA) and 67-87 (LLYR…ELVV). The active-site Proton donor is the His-40. Residue Arg-91 participates in substrate binding. The active-site Nucleophile is His-97. Helical transmembrane passes span 131-151 (FLIT…LKAL), 215-235 (IGCI…TFSP), and 250-270 (AVAL…IYPV). The Prevents secretion from ER motif lies at 274 to 277 (GKNL).

This sequence belongs to the glucose-6-phosphatase family.

The protein localises to the endoplasmic reticulum membrane. The enzyme catalyses D-glucose 6-phosphate + H2O = D-glucose + phosphate. It functions in the pathway carbohydrate biosynthesis; gluconeogenesis. In terms of biological role, hydrolyzes glucose-6-phosphate to glucose in the endoplasmic reticulum. Forms with the glucose-6-phosphate transporter (SLC37A4/G6PT) the complex responsible for glucose production in the terminal step of glycogenolysis and gluconeogenesis. Hence, it is the key enzyme in homeostatic regulation of blood glucose levels. The protein is Glucose-6-phosphatase catalytic subunit 1 (g6pc1) of Haplochromis xenognathus (Lake Victoria cichlid).